Here is a 513-residue protein sequence, read N- to C-terminus: Pantetheinase (513 aa).

A signal peptide spans 1-22 (MITSPLLAYVAILFFCVLKASS). Residues 40–307 (APLTPVSHEE…GKLLLSQLDS (268 aa)) enclose the CN hydrolase domain. Glutamate 80 serves as the catalytic Proton acceptor. An N-linked (GlcNAc...) asparagine glycan is attached at asparagine 147. Residue lysine 179 is the Proton donor of the active site. Cysteine 212 functions as the Nucleophile in the catalytic mechanism. N-linked (GlcNAc...) asparagine glycosylation is found at asparagine 315 and asparagine 353. Glycine 487 is lipidated: GPI-anchor amidated glycine. The propeptide at 488–513 (ASADLVAQGLRVMLGVIITIMYSLSW) is removed in mature form.

The protein belongs to the carbon-nitrogen hydrolase superfamily. BTD/VNN family. Monomer. As to expression, detected in kidney (at protein level).

It is found in the cell membrane. The enzyme catalyses (R)-pantetheine + H2O = cysteamine + (R)-pantothenate. In terms of biological role, amidohydrolase that hydrolyzes specifically one of the carboamide linkages in D-pantetheine thus recycling pantothenic acid (vitamin B5) and releasing cysteamine. This chain is Pantetheinase (VNN1), found in Sus scrofa (Pig).